Reading from the N-terminus, the 543-residue chain is Probable E3 ubiquitin-protein ligase ARI9 (543 aa).

A disordered region spans residues methionine 1 to serine 26. The interval valine 124–valine 332 is TRIAD supradomain. Zn(2+) contacts are provided by cysteine 128, cysteine 131, cysteine 145, histidine 147, cysteine 150, cysteine 153, cysteine 173, cysteine 178, cysteine 217, cysteine 222, cysteine 240, cysteine 242, cysteine 247, cysteine 250, histidine 255, cysteine 260, cysteine 287, and cysteine 290. Residues cysteine 128 to cysteine 178 form an RING-type 1 zinc finger. Residues glutamate 197–cysteine 260 form an IBR-type zinc finger. Residues cysteine 287 to cysteine 317 form an RING-type 2; atypical zinc finger. Cysteine 300 is a catalytic residue. Zn(2+) contacts are provided by cysteine 305, cysteine 309, cysteine 314, cysteine 317, histidine 324, and cysteine 328.

Belongs to the RBR family. Ariadne subfamily. It depends on Zn(2+) as a cofactor.

It carries out the reaction [E2 ubiquitin-conjugating enzyme]-S-ubiquitinyl-L-cysteine + [acceptor protein]-L-lysine = [E2 ubiquitin-conjugating enzyme]-L-cysteine + [acceptor protein]-N(6)-ubiquitinyl-L-lysine.. It functions in the pathway protein modification; protein ubiquitination. Functionally, might act as an E3 ubiquitin-protein ligase, or as part of E3 complex, which accepts ubiquitin from specific E2 ubiquitin-conjugating enzymes and then transfers it to substrates. This is Probable E3 ubiquitin-protein ligase ARI9 (ARI9) from Arabidopsis thaliana (Mouse-ear cress).